Reading from the N-terminus, the 63-residue chain is Large ribosomal subunit protein bL32 (63 aa).

Disordered stretches follow at residues 1–25 (MAVP…LTTP) and 42–63 (VSPK…QNND). Basic residues predominate over residues 7–20 (KTSKQKKRSRRGHI). Residues 54–63 (ANENKQQNND) show a composition bias toward polar residues.

Belongs to the bacterial ribosomal protein bL32 family.

The protein is Large ribosomal subunit protein bL32 of Lactobacillus johnsonii (strain CNCM I-12250 / La1 / NCC 533).